The primary structure comprises 257 residues: MDRIIEKLDHGWWVVSHEQKLWLPKGELPYGEAANFDLVGQRALQIGEWQGEPVWLVQQQRRHDMGSVRQVIDLDVRLFQLAGRGVQLAEFYRSHKYCGYCGHEMYPSKTEWAMLCSHCRERYYPQIAPCIIVAIRRDDSILLAQHTRHRNGVHTVLAGFVEVGETLEQAVAREVMEESGIKVKNLRYVTSQPWPFPQSLMTAFMAEYDSGDIVIDPKELLEANWYRYDDLPLLPPPGTVARRLIEDTVAMCRAEYE.

Lys25 and Arg69 together coordinate substrate. Positions 98 and 101 each coordinate Zn(2+). Glu111 contributes to the substrate binding site. Zn(2+) is bound by residues Cys116 and Cys119. A substrate-binding site is contributed by Tyr124. The region spanning 125–248 (PQIAPCIIVA…TVARRLIEDT (124 aa)) is the Nudix hydrolase domain. Positions 158, 174, and 178 each coordinate a divalent metal cation. The Nudix box signature appears at 159–180 (GFVEVGETLEQAVAREVMEESG). Residue 192–199 (QPWPFPQS) participates in substrate binding. Residue Glu219 participates in a divalent metal cation binding. Position 241 (Ala241) interacts with substrate.

It belongs to the Nudix hydrolase family. NudC subfamily. In terms of assembly, homodimer. Mg(2+) is required as a cofactor. The cofactor is Mn(2+). Requires Zn(2+) as cofactor.

The enzyme catalyses a 5'-end NAD(+)-phospho-ribonucleoside in mRNA + H2O = a 5'-end phospho-adenosine-phospho-ribonucleoside in mRNA + beta-nicotinamide D-ribonucleotide + 2 H(+). It carries out the reaction NAD(+) + H2O = beta-nicotinamide D-ribonucleotide + AMP + 2 H(+). The catalysed reaction is NADH + H2O = reduced beta-nicotinamide D-ribonucleotide + AMP + 2 H(+). Its function is as follows. mRNA decapping enzyme that specifically removes the nicotinamide adenine dinucleotide (NAD) cap from a subset of mRNAs by hydrolyzing the diphosphate linkage to produce nicotinamide mononucleotide (NMN) and 5' monophosphate mRNA. The NAD-cap is present at the 5'-end of some mRNAs and stabilizes RNA against 5'-processing. Has preference for mRNAs with a 5'-end purine. Catalyzes the hydrolysis of a broad range of dinucleotide pyrophosphates. This Escherichia fergusonii (strain ATCC 35469 / DSM 13698 / CCUG 18766 / IAM 14443 / JCM 21226 / LMG 7866 / NBRC 102419 / NCTC 12128 / CDC 0568-73) protein is NAD-capped RNA hydrolase NudC.